Consider the following 188-residue polypeptide: uncharacterized protein (188 aa).

A helical transmembrane segment spans residues 136 to 156 (TLVKLLLLFLSLMVVIVGVWW).

The protein localises to the host membrane. This is an uncharacterized protein from Magallana gigas (Pacific oyster).